A 433-amino-acid polypeptide reads, in one-letter code: Glutamate-1-semialdehyde 2,1-aminomutase (433 aa).

Position 273 is an N6-(pyridoxal phosphate)lysine (lysine 273).

It belongs to the class-III pyridoxal-phosphate-dependent aminotransferase family. HemL subfamily. As to quaternary structure, homodimer. The cofactor is pyridoxal 5'-phosphate.

The protein localises to the cytoplasm. The enzyme catalyses (S)-4-amino-5-oxopentanoate = 5-aminolevulinate. It participates in porphyrin-containing compound metabolism; protoporphyrin-IX biosynthesis; 5-aminolevulinate from L-glutamyl-tRNA(Glu): step 2/2. In Ralstonia pickettii (strain 12J), this protein is Glutamate-1-semialdehyde 2,1-aminomutase.